We begin with the raw amino-acid sequence, 162 residues long: Nucleotide-binding protein Francci3_0558 (162 aa).

Belongs to the YajQ family.

Nucleotide-binding protein. This chain is Nucleotide-binding protein Francci3_0558, found in Frankia casuarinae (strain DSM 45818 / CECT 9043 / HFP020203 / CcI3).